A 639-amino-acid chain; its full sequence is CREB3 regulatory factor (639 aa).

The disordered stretch occupies residues 302–422 (PLPQEGPGSL…SVEDLKEVTS (121 aa)). Residues 310–328 (SLAAGESSSLSASTSVSDS) show a composition bias toward low complexity. Residues 339-351 (LFVSDNLGEQPTK) show a composition bias toward polar residues. The span at 355–370 (EEDEEDEEDVDDEDHD) shows a compositional bias: acidic residues. Over residues 371–380 (EGFGSEHELS) the composition is skewed to basic and acidic residues. Acidic residues predominate over residues 381 to 401 (ENEEEEEEEEDYEDDKDDDIS). Residues 521–584 (TARPRSRKEK…VNRVQNPRDE (64 aa)) form the bZIP domain. Residues 523-532 (RPRSRKEKNK) are basic motif. A leucine-zipper region spans residues 533–540 (LASRACRL).

This sequence belongs to the bZIP family. CREBRF subfamily. Interacts (via leucine-zipper domain) with CREB3 (via leucine-zipper domain); the interaction promotes CREB3 degradation. In terms of processing, probably degraded by the proteasome.

Its subcellular location is the nucleus. In terms of biological role, acts as a negative regulator of the endoplasmic reticulum stress response or unfolded protein response (UPR). Represses the transcriptional activity of CREB3 during the UPR. Recruits CREB3 into nuclear foci. The sequence is that of CREB3 regulatory factor (CREBRF) from Homo sapiens (Human).